The chain runs to 427 residues: Serine hydroxymethyltransferase (427 aa).

Residues leucine 122 and 126-128 contribute to the (6S)-5,6,7,8-tetrahydrofolate site; that span reads GHL. N6-(pyridoxal phosphate)lysine is present on lysine 231.

It belongs to the SHMT family. As to quaternary structure, homodimer. Pyridoxal 5'-phosphate serves as cofactor.

Its subcellular location is the cytoplasm. The catalysed reaction is (6R)-5,10-methylene-5,6,7,8-tetrahydrofolate + glycine + H2O = (6S)-5,6,7,8-tetrahydrofolate + L-serine. It functions in the pathway one-carbon metabolism; tetrahydrofolate interconversion. The protein operates within amino-acid biosynthesis; glycine biosynthesis; glycine from L-serine: step 1/1. Its function is as follows. Catalyzes the reversible interconversion of serine and glycine with tetrahydrofolate (THF) serving as the one-carbon carrier. This reaction serves as the major source of one-carbon groups required for the biosynthesis of purines, thymidylate, methionine, and other important biomolecules. Also exhibits THF-independent aldolase activity toward beta-hydroxyamino acids, producing glycine and aldehydes, via a retro-aldol mechanism. The polypeptide is Serine hydroxymethyltransferase (Acidobacterium capsulatum (strain ATCC 51196 / DSM 11244 / BCRC 80197 / JCM 7670 / NBRC 15755 / NCIMB 13165 / 161)).